The following is a 227-amino-acid chain: 27 kDa glycoprotein (227 aa).

The first 17 residues, 1-17 (MMWKTVLITIFAAGVLA), serve as a signal peptide directing secretion. N-linked (GlcNAc...) asparagine glycans are attached at residues Asn-118 and Asn-173.

Belongs to the UPF0408 family. Expressed in the subesophageal body, fat bodies, hemocytes, midgut and Malpighian tubules. Not expressed in silk glands.

Its subcellular location is the secreted. The chain is 27 kDa glycoprotein from Bombyx mori (Silk moth).